Reading from the N-terminus, the 1216-residue chain is Phospholipase D B (1216 aa).

The segment covering 1–14 (MNLSQEHAINQNLH) has biased composition (polar residues). The interval 1-48 (MNLSQEHAINQNLHKNQKNEEKIEKKTINKDGRGQMNYDGEEGQGEKS) is disordered. Positions 17–33 (QKNEEKIEKKTINKDGR) are enriched in basic and acidic residues. EF-hand domains lie at 196-231 (RNAD…MCRG) and 232-267 (TKKE…ISDI). Residues D209, N211, D213, K215, and E220 each contribute to the Ca(2+) site. The 116-residue stretch at 347 to 462 (EINMNGQLTK…WVNAIRFHSR (116 aa)) folds into the PH domain. The region spanning 585-612 (LSWSHHQKNAIIDQQIAFVGGIDICLMR) is the PLD phosphodiesterase 1 domain. Active-site residues include H590, K592, and D597. Residues 732–844 (VSYGREKPTH…GLKSKNYKNN (113 aa)) form a disordered region. The span at 776–789 (NNSTNSENSENSYS) shows a compositional bias: low complexity. The span at 790–813 (EFDEEDEEGNQEEEDEDEFDEFEK) shows a compositional bias: acidic residues. The region spanning 1036 to 1063 (EQIYVHSKVLIVDDRVAVIGSCNINDRS) is the PLD phosphodiesterase 2 domain. Residues H1041, K1043, and D1048 contribute to the active site.

The protein belongs to the phospholipase D family.

Its subcellular location is the cytoplasmic vesicle. It localises to the cytoplasm. It is found in the cell cortex. The enzyme catalyses a 1,2-diacyl-sn-glycero-3-phosphocholine + H2O = a 1,2-diacyl-sn-glycero-3-phosphate + choline + H(+). With respect to regulation, inhibited by butan-1-ol. Functionally, plays a role in cell growth. Hydrolyzes membrane phospholipids, such as PtdCho (phosphatidylcholine), producing the free headgroup and PtdOH (phosphatidic acid; signaling molecule on its own). Involved in the inhibition of actin-based motility and endocytosis. Its inhibition causes complete collapse of F-actin organization. Plays an important role in cell migration by localizing along the anterior cell membrane. Overexpression leads to the inability to aggregate even at higher cell density. Also known as a negative regulator of quorum sensing. The sequence is that of Phospholipase D B (pldB) from Dictyostelium discoideum (Social amoeba).